The following is a 686-amino-acid chain: Hexamerin 70c (686 aa).

An N-terminal signal peptide occupies residues 1-19; that stretch reads MLSKVVLLVALAAICGAQG. The region spanning 32-155 is the Hemocyanin N-terminal domain; sequence FLHKQKKIFD…IAVLYRPDTK (124 aa). The 271-residue stretch at 161–431 folds into the Hemocyanin middle domain; sequence AIYEIYPNYF…MLYQNILSYF (271 aa). Asn205 and Asn662 each carry an N-linked (GlcNAc...) asparagine glycan. Residues 440–676 form the Hemocyanin C-terminal domain; that stretch reads QYSQSELQMP…NMYFKDVFIY (237 aa).

Belongs to the hemocyanin/hexamerin family. As to quaternary structure, probable homohexamer. As to expression, expressed in the fat body and secreted into the hemolymph (at protein level). Present in trophocytes and oenocytes of the fat body (at protein level). Not expressed in ovary or testis.

It localises to the secreted. It is found in the nucleus. Its subcellular location is the cytoplasm. The protein localises to the cytoplasmic granule. Storage protein that may function as a nutrient supply to compensate for lack of dietary proteins during metamorphosis and egg production. This chain is Hexamerin 70c, found in Apis mellifera (Honeybee).